The chain runs to 262 residues: F-actin-capping protein subunit alpha (262 aa).

It belongs to the F-actin-capping protein alpha subunit family. Heterodimer of an alpha and a beta subunit.

Functionally, F-actin-capping proteins bind in a Ca(2+)-independent manner to the fast growing ends of actin filaments (barbed end) thereby blocking the exchange of subunits at these ends. Unlike other capping proteins (such as gelsolin and severin), these proteins do not sever actin filaments. This chain is F-actin-capping protein subunit alpha (CAP1), found in Candida glabrata (strain ATCC 2001 / BCRC 20586 / JCM 3761 / NBRC 0622 / NRRL Y-65 / CBS 138) (Yeast).